The sequence spans 1374 residues: DNA-directed RNA polymerase subunit beta (1374 aa).

This sequence belongs to the RNA polymerase beta chain family. As to quaternary structure, the RNAP catalytic core consists of 2 alpha, 1 beta, 1 beta' and 1 omega subunit. When a sigma factor is associated with the core the holoenzyme is formed, which can initiate transcription.

The catalysed reaction is RNA(n) + a ribonucleoside 5'-triphosphate = RNA(n+1) + diphosphate. DNA-dependent RNA polymerase catalyzes the transcription of DNA into RNA using the four ribonucleoside triphosphates as substrates. The protein is DNA-directed RNA polymerase subunit beta of Rhodopseudomonas palustris (strain BisB5).